Consider the following 705-residue polypeptide: Methionine--tRNA ligase (705 aa).

The 'HIGH' region signature appears at 17–27; it reads PYANGPVHLGH. Zn(2+)-binding residues include Cys-149, Cys-152, Cys-162, and Cys-165. A 'KMSKS' region motif is present at residues 347–351; it reads KFSKS. Lys-350 serves as a coordination point for ATP. One can recognise a tRNA-binding domain in the interval 604-705; that stretch reads EFQKVDLRVA…GEGINGQSVQ (102 aa).

This sequence belongs to the class-I aminoacyl-tRNA synthetase family. MetG type 1 subfamily. As to quaternary structure, homodimer. It depends on Zn(2+) as a cofactor.

It is found in the cytoplasm. It carries out the reaction tRNA(Met) + L-methionine + ATP = L-methionyl-tRNA(Met) + AMP + diphosphate. Its function is as follows. Is required not only for elongation of protein synthesis but also for the initiation of all mRNA translation through initiator tRNA(fMet) aminoacylation. The chain is Methionine--tRNA ligase from Chlorobium chlorochromatii (strain CaD3).